Here is an 843-residue protein sequence, read N- to C-terminus: Glycogen phosphorylase, brain form (843 aa).

At A2 the chain carries N-acetylalanine. Position 15 is a phosphoserine; by PHK; in form phosphorylase A (S15). AMP-binding residues include D43, Y197, and R310. The residue at position 197 (Y197) is a Phosphotyrosine. Y473 is modified (phosphotyrosine). K569 is a pyridoxal 5'-phosphate binding site. The tract at residues 677–678 (TG) is pyridoxal 5'-phosphate. K681 is modified (N6-(pyridoxal phosphate)lysine).

Belongs to the glycogen phosphorylase family. In terms of assembly, homodimer. Dimers associate into a tetramer to form the enzymatically active phosphorylase A. Pyridoxal 5'-phosphate is required as a cofactor. In terms of processing, phosphorylation of Ser-15 converts phosphorylase B (unphosphorylated) to phosphorylase A.

The enzyme catalyses [(1-&gt;4)-alpha-D-glucosyl](n) + phosphate = [(1-&gt;4)-alpha-D-glucosyl](n-1) + alpha-D-glucose 1-phosphate. Its activity is regulated as follows. Activity of phosphorylase is controlled both by allosteric means (through the non-covalent binding of metabolites) and by covalent modification. Thus AMP allosterically activates, whereas ATP, ADP, and glucose-6-phosphate allosterically inhibit, phosphorylase B. Glycogen phosphorylase that regulates glycogen mobilization. Phosphorylase is an important allosteric enzyme in carbohydrate metabolism. Enzymes from different sources differ in their regulatory mechanisms and in their natural substrates. However, all known phosphorylases share catalytic and structural properties. The chain is Glycogen phosphorylase, brain form (PYGB) from Pongo abelii (Sumatran orangutan).